Consider the following 137-residue polypeptide: Methylglyoxal synthase (137 aa).

The 137-residue stretch at 1–137 (MKIALIAHDR…NIVHGRDRDA (137 aa)) folds into the MGS-like domain. Substrate is bound by residues histidine 8, lysine 12, 34–37 (TGTT), and 54–55 (SG). The active-site Proton donor/acceptor is the aspartate 60. Histidine 87 provides a ligand contact to substrate.

The protein belongs to the methylglyoxal synthase family.

It catalyses the reaction dihydroxyacetone phosphate = methylglyoxal + phosphate. Functionally, catalyzes the formation of methylglyoxal from dihydroxyacetone phosphate. This chain is Methylglyoxal synthase, found in Bacillus licheniformis (strain ATCC 14580 / DSM 13 / JCM 2505 / CCUG 7422 / NBRC 12200 / NCIMB 9375 / NCTC 10341 / NRRL NRS-1264 / Gibson 46).